The primary structure comprises 606 residues: Elongation factor 4 (606 aa).

The region spanning 11–193 (PHIRNFSIIA…RLVRDVPPPK (183 aa)) is the tr-type G domain. GTP-binding positions include 23–28 (DHGKST) and 140–143 (NKMD).

Belongs to the TRAFAC class translation factor GTPase superfamily. Classic translation factor GTPase family. LepA subfamily.

The protein resides in the cell inner membrane. The enzyme catalyses GTP + H2O = GDP + phosphate + H(+). In terms of biological role, required for accurate and efficient protein synthesis under certain stress conditions. May act as a fidelity factor of the translation reaction, by catalyzing a one-codon backward translocation of tRNAs on improperly translocated ribosomes. Back-translocation proceeds from a post-translocation (POST) complex to a pre-translocation (PRE) complex, thus giving elongation factor G a second chance to translocate the tRNAs correctly. Binds to ribosomes in a GTP-dependent manner. This chain is Elongation factor 4, found in Chromohalobacter salexigens (strain ATCC BAA-138 / DSM 3043 / CIP 106854 / NCIMB 13768 / 1H11).